A 38-amino-acid chain; its full sequence is MKVRSSIKKIDQDDQIVKRRGRLYVINKKKPRNKQRQG.

This sequence belongs to the bacterial ribosomal protein bL36 family.

The protein is Large ribosomal subunit protein bL36A of Prochlorococcus marinus (strain MIT 9515).